Here is a 137-residue protein sequence, read N- to C-terminus: Large ribosomal subunit protein uL16 (137 aa).

This sequence belongs to the universal ribosomal protein uL16 family. As to quaternary structure, part of the 50S ribosomal subunit.

Binds 23S rRNA and is also seen to make contacts with the A and possibly P site tRNAs. The chain is Large ribosomal subunit protein uL16 from Nitrobacter hamburgensis (strain DSM 10229 / NCIMB 13809 / X14).